Reading from the N-terminus, the 187-residue chain is Cerebral dopamine neurotrophic factor (187 aa).

A signal peptide spans 1–24 (MRCTSPAALVTFCAGLWISNHVLA). 3 disulfide bridges follow: Cys-37/Cys-124, Cys-40/Cys-113, and Cys-71/Cys-82.

It belongs to the ARMET family.

It is found in the secreted. Trophic factor for dopamine neurons. Prevents the 6-hydroxydopamine (6-OHDA)-induced degeneration of dopaminergic neurons. When administered after 6-OHDA-lesioning, restores the dopaminergic function and prevents the degeneration of dopaminergic neurons in substantia nigra. This is Cerebral dopamine neurotrophic factor (Cdnf) from Rattus norvegicus (Rat).